Here is a 345-residue protein sequence, read N- to C-terminus: Neurotrimin (345 aa).

Positions 1 to 30 are cleaved as a signal peptide; it reads MGVCGSLFLPWKCLVVVSLRLLFLVPTGVP. Ig-like C2-type domains lie at 39–126, 136–218, and 222–309; these read PKAM…PKTS, PKIV…VKVT, and PPYI…ASIT. Asparagine 44, asparagine 70, and asparagine 152 each carry an N-linked (GlcNAc...) asparagine glycan. Cysteine 57 and cysteine 115 are oxidised to a cystine. Intrachain disulfides connect cysteine 157–cysteine 201 and cysteine 243–cysteine 295. 4 N-linked (GlcNAc...) asparagine glycosylation sites follow: asparagine 284, asparagine 292, asparagine 305, and asparagine 321. The GPI-anchor amidated asparagine moiety is linked to residue asparagine 321. Residues 322 to 345 constitute a propeptide, removed in mature form; sequence GTSSRRAGCLWLLPLLVLHLLLKF.

The protein belongs to the immunoglobulin superfamily. IgLON family.

It is found in the cell membrane. In terms of biological role, neural cell adhesion molecule. This Bos taurus (Bovine) protein is Neurotrimin (NTM).